Reading from the N-terminus, the 648-residue chain is Cell surface glycoprotein MUC18 (648 aa).

A signal peptide spans 1–23 (MGLPRLVCAFLFAACCCCRSATG). 2 consecutive Ig-like V-type domains span residues 24–131 (VPGE…HYVQ) and 141–244 (PTIQ…KEVT). Topologically, residues 24-560 (VPGEEKQPTP…EKKLPQQESK (537 aa)) are extracellular. 5 disulfide bridges follow: C50-C118, C163-C225, C274-C322, C367-C409, and C454-C501. N58 carries an N-linked (GlcNAc...) asparagine glycan. Ig-like C2-type domains are found at residues 246-332 (PVLY…TTVM), 337-426 (PLEL…RRVS), and 432-512 (SPWM…SNTT). The disordered stretch occupies residues 282–304 (PHFTINKKNPSTEEMEEESTDEN). N-linked (GlcNAc...) asparagine glycosylation is present at N510. Positions 527–549 (DSSQTTGLSTPTVSPHSRANSTS) are enriched in polar residues. Positions 527–554 (DSSQTTGLSTPTVSPHSRANSTSTEKKL) are disordered. Residues 561–581 (GVVIVAVIVCTLVLAVLGATL) form a helical membrane-spanning segment. The Cytoplasmic segment spans residues 582 to 648 (YYFYKKGKLP…QGEKYIDLRH (67 aa)). Residues S608 and S616 each carry the phosphoserine modification. The disordered stretch occupies residues 626 to 648 (LQGSNGDKRAPGDQGEKYIDLRH). Positions 631–648 (GDKRAPGDQGEKYIDLRH) are enriched in basic and acidic residues.

As to expression, detected in lung, uterus and placenta (at protein level). Detected in heart, lung, kidney, adrenal gland, intestine, testis, skeletal muscle and aorta. Detected at low levels in adult brain, in particular in brain stem and spinal cord, but also in hippocampus, olfactory bulb and striatum (at protein level).

Its subcellular location is the cell membrane. The protein localises to the perikaryon. Plays a role in cell adhesion, and in cohesion of the endothelial monolayer at intercellular junctions in vascular tissue. Its expression may allow melanoma cells to interact with cellular elements of the vascular system, thereby enhancing hematogeneous tumor spread. Could be an adhesion molecule active in neural crest cells during embryonic development. Acts as a surface receptor that triggers tyrosine phosphorylation of FYN and PTK2/FAK1, and a transient increase in the intracellular calcium concentration. This chain is Cell surface glycoprotein MUC18 (Mcam), found in Rattus norvegicus (Rat).